Reading from the N-terminus, the 888-residue chain is uncharacterized protein (888 aa).

Residues 1-20 form the signal peptide; the sequence is MKILKSLVLLVLFIVMPAKA. 6 helical membrane-spanning segments follow: residues 513–533, 565–585, 611–631, 649–669, 682–702, and 781–801; these read IVKA…VAGA, TYFF…VVGA, LLFI…IITI, VIAF…IILM, ISTL…FLLI, and LLFY…NIVV.

This sequence belongs to the TrbL/VirB6 family.

It is found in the cell membrane. This is an uncharacterized protein from Rickettsia prowazekii (strain Madrid E).